Consider the following 415-residue polypeptide: Thyroxine-binding globulin (415 aa).

A signal peptide spans 1-20; it reads MSPFLYLVLLVLGLHATIHC. Asparagine 36, asparagine 99, asparagine 165, and asparagine 253 each carry an N-linked (GlcNAc...) asparagine glycan. Asparagine 293 and arginine 398 together coordinate thyroxine.

The protein belongs to the serpin family.

Its subcellular location is the secreted. In terms of biological role, major thyroid hormone transport protein in serum. The protein is Thyroxine-binding globulin (SERPINA7) of Pan troglodytes (Chimpanzee).